Reading from the N-terminus, the 509-residue chain is ATP synthase subunit alpha (509 aa).

Position 171–178 (171–178) interacts with ATP; the sequence is GDRKTGKT.

This sequence belongs to the ATPase alpha/beta chains family. F-type ATPases have 2 components, CF(1) - the catalytic core - and CF(0) - the membrane proton channel. CF(1) has five subunits: alpha(3), beta(3), gamma(1), delta(1), epsilon(1). CF(0) has three main subunits: a(1), b(2) and c(9-12). The alpha and beta chains form an alternating ring which encloses part of the gamma chain. CF(1) is attached to CF(0) by a central stalk formed by the gamma and epsilon chains, while a peripheral stalk is formed by the delta and b chains.

It localises to the cell inner membrane. The enzyme catalyses ATP + H2O + 4 H(+)(in) = ADP + phosphate + 5 H(+)(out). In terms of biological role, produces ATP from ADP in the presence of a proton gradient across the membrane. The alpha chain is a regulatory subunit. The polypeptide is ATP synthase subunit alpha (Ehrlichia canis (strain Jake)).